Reading from the N-terminus, the 174-residue chain is Gamma-crystallin A (174 aa).

Beta/gamma crystallin 'Greek key' domains are found at residues 2 to 40 (GKIT…RVDS) and 41 to 83 (GCWM…RSIP). Residues 84–87 (YTSS) form a connecting peptide region. Beta/gamma crystallin 'Greek key' domains lie at 88-128 (HRIR…HVLE) and 129-171 (GCWV…RRVM).

It belongs to the beta/gamma-crystallin family.

Its function is as follows. Crystallins are the dominant structural components of the vertebrate eye lens. The chain is Gamma-crystallin A (Cryga) from Mus musculus (Mouse).